We begin with the raw amino-acid sequence, 460 residues long: Bifunctional protein GlmU (460 aa).

The interval 1-235 (MALSAAIILA…PLSVEGVNDR (235 aa)) is pyrophosphorylase. UDP-N-acetyl-alpha-D-glucosamine contacts are provided by residues 9 to 12 (LAAG), Lys-23, Gln-76, and 81 to 82 (GT). Asp-109 contacts Mg(2+). Positions 146, 161, 176, and 233 each coordinate UDP-N-acetyl-alpha-D-glucosamine. Asn-233 contacts Mg(2+). The linker stretch occupies residues 236–256 (VQLAALAKAHNKRVCEHWMRE). The N-acetyltransferase stretch occupies residues 257 to 460 (GVTILDPDTT…VEGWKPEWER (204 aa)). The UDP-N-acetyl-alpha-D-glucosamine site is built by Arg-338 and Lys-356. His-368 (proton acceptor) is an active-site residue. Tyr-371 and Asn-382 together coordinate UDP-N-acetyl-alpha-D-glucosamine. Residues 391 to 392 (NY) and Ala-428 contribute to the acetyl-CoA site.

The protein in the N-terminal section; belongs to the N-acetylglucosamine-1-phosphate uridyltransferase family. It in the C-terminal section; belongs to the transferase hexapeptide repeat family. In terms of assembly, homotrimer. Requires Mg(2+) as cofactor.

The protein localises to the cytoplasm. The catalysed reaction is alpha-D-glucosamine 1-phosphate + acetyl-CoA = N-acetyl-alpha-D-glucosamine 1-phosphate + CoA + H(+). It carries out the reaction N-acetyl-alpha-D-glucosamine 1-phosphate + UTP + H(+) = UDP-N-acetyl-alpha-D-glucosamine + diphosphate. It functions in the pathway nucleotide-sugar biosynthesis; UDP-N-acetyl-alpha-D-glucosamine biosynthesis; N-acetyl-alpha-D-glucosamine 1-phosphate from alpha-D-glucosamine 6-phosphate (route II): step 2/2. It participates in nucleotide-sugar biosynthesis; UDP-N-acetyl-alpha-D-glucosamine biosynthesis; UDP-N-acetyl-alpha-D-glucosamine from N-acetyl-alpha-D-glucosamine 1-phosphate: step 1/1. Its pathway is bacterial outer membrane biogenesis; LPS lipid A biosynthesis. Functionally, catalyzes the last two sequential reactions in the de novo biosynthetic pathway for UDP-N-acetylglucosamine (UDP-GlcNAc). The C-terminal domain catalyzes the transfer of acetyl group from acetyl coenzyme A to glucosamine-1-phosphate (GlcN-1-P) to produce N-acetylglucosamine-1-phosphate (GlcNAc-1-P), which is converted into UDP-GlcNAc by the transfer of uridine 5-monophosphate (from uridine 5-triphosphate), a reaction catalyzed by the N-terminal domain. In Bifidobacterium adolescentis (strain ATCC 15703 / DSM 20083 / NCTC 11814 / E194a), this protein is Bifunctional protein GlmU.